The chain runs to 504 residues: Dihydrolipoamide dehydrogenase (504 aa).

The N-terminal 34 residues, 1–34 (MLSQRLIGRTAVKSAFRPSGLPTVVNASRWRRGY), are a transit peptide targeting the mitochondrion. Residues 69–78 (EKRGTLGGTC), lysine 87, glycine 151, and 180–182 (TGS) contribute to the FAD site. An intrachain disulfide couples cysteine 78 to cysteine 83. NAD(+)-binding positions include 217–224 (GGGIIGLE), glutamate 240, valine 275, and glycine 310. FAD contacts are provided by residues aspartate 351 and 357–360 (MLAH). The active-site Proton acceptor is the histidine 483.

Belongs to the class-I pyridine nucleotide-disulfide oxidoreductase family. Eukaryotic pyruvate dehydrogenase (PDH) complexes are organized as a core consisting of the oligomeric dihydrolipoamide acetyl-transferase (E2), around which are arranged multiple copies of pyruvate dehydrogenase (E1), dihydrolipoamide dehydrogenase (E3) and protein X (E3BP) bound by non-covalent bonds. The Chaetomium thermophilum PDH complex contains 60 E2 units, 12 E3BP units, about 20 E1 units, and 12 or more E3 units. The units are organized in 1 E2 60-mer, 4 E3BP trimers, about 20 E1 tetramers, and a maximum of 12 E3 dimers. The E3BP trimers are bound inside the icosahedral core with tetrahedral symmetry. Requires FAD as cofactor.

Its subcellular location is the mitochondrion. The catalysed reaction is N(6)-[(R)-dihydrolipoyl]-L-lysyl-[protein] + NAD(+) = N(6)-[(R)-lipoyl]-L-lysyl-[protein] + NADH + H(+). In terms of biological role, lipoamide dehydrogenase is a component of the alpha-ketoacid dehydrogenase complexes. This includes the pyruvate dehydrogenase complex, which catalyzes the overall conversion of pyruvate to acetyl-CoA and CO(2). Also acts as a component of the glycine cleavage system (glycine decarboxylase complex), which catalyzes the degradation of glycine. The 10-megadalton pyruvate dehydrogenase complex contains multiple copies of three enzymatic components: pyruvate dehydrogenase (E1), dihydrolipoamide acetyltransferase (E2) and lipoamide dehydrogenase (E3) and catalyzes the overall oxidative decarboxylation of pyruvate to form acetyl-CoA and CO(2). Within the complex, pyruvate and thiamine pyrophosphate (TPP or vitamin B1) are bound by pyruvate dehydrogenase E1 subunits alpha and beta and pyruvate is decarboxylated leading to the 2-carbon hydrohyethyl bound to TPP. The E2 component contains covalently-bound lipoyl cofactors and transfers the hydroxyethyl group from TPP to an oxidized form of covalently bound lipoamide, and the resulting acetyl group is then transferred to free coenzyme A to form acetyl-CoA and reduced dihydrolipoamide-E2. Finally, the flavoprotein dihydrolipoamide dehydrogenase (E3) re-oxidizes the lipoyl group of dihydrolipoamide-E2 to form lipoamide-E2 and NADH. A fourth subunit, E3BP, is responsible for tethering E3 in proximity to the core, forming the entire metabolon. This chain is Dihydrolipoamide dehydrogenase, found in Chaetomium thermophilum (strain DSM 1495 / CBS 144.50 / IMI 039719) (Thermochaetoides thermophila).